The sequence spans 570 residues: Urease subunit alpha (570 aa).

The Urease domain occupies 132–570; the sequence is GGIDTHVHFI…LPMAQRYFLF (439 aa). His-137 and His-139 together coordinate Ni(2+). 2 residues coordinate substrate: His-139 and Ala-170. Ni(2+) is bound at residue Lys-220. Lys-220 is modified (N6-carboxylysine). The substrate site is built by His-222 and His-249. Ni(2+)-binding residues include His-249 and His-275. His-323 (proton donor) is an active-site residue. Ni(2+) is bound at residue Asp-363. Ala-366 lines the substrate pocket.

This sequence belongs to the metallo-dependent hydrolases superfamily. Urease alpha subunit family. As to quaternary structure, heterotrimer of UreA (gamma), UreB (beta) and UreC (alpha) subunits. Three heterotrimers associate to form the active enzyme. Ni cation is required as a cofactor. Post-translationally, carboxylation allows a single lysine to coordinate two nickel ions.

It is found in the cytoplasm. It catalyses the reaction urea + 2 H2O + H(+) = hydrogencarbonate + 2 NH4(+). It functions in the pathway nitrogen metabolism; urea degradation; CO(2) and NH(3) from urea (urease route): step 1/1. With respect to regulation, inhibited by fluoride. This Sporosarcina pasteurii (Bacillus pasteurii) protein is Urease subunit alpha.